Here is a 524-residue protein sequence, read N- to C-terminus: Probable metalloreductase AIM14 (524 aa).

A run of 7 helical transmembrane segments spans residues 24-44 (VNIKYGYVILALSIVHMVLSI), 69-89 (SIPFWVSTLVWLAIFAFLSIF), 104-121 (RLGRMAYCLVPFTIFISL), 143-163 (WISRLIFATAIGHGLGFLYKW), 179-199 (FLGVTVFALMPVLIFASVNVM), 206-226 (LFYILHNVTLWMFVVLIAFHA), and 230-250 (VPLLAVINLALLGYQIYQRFF). The Ferric oxidoreductase domain maps to 105 to 222 (LGRMAYCLVP…VTLWMFVVLI (118 aa)). The FAD-binding FR-type domain maps to 248–372 (RFFKSYYLHD…GGSGISFGLP (125 aa)).

Belongs to the ferric reductase (FRE) family. AIM14 subfamily.

Its subcellular location is the membrane. Probable cell surface metalloreductase. May be involved in iron or copper homeostasis. This Scheffersomyces stipitis (strain ATCC 58785 / CBS 6054 / NBRC 10063 / NRRL Y-11545) (Yeast) protein is Probable metalloreductase AIM14 (AIM14).